The following is a 241-amino-acid chain: Methylthioribulose-1-phosphate dehydratase (241 aa).

Polar residues predominate over residues 1 to 11 (MSSLCDTSNGE). Positions 1 to 20 (MSSLCDTSNGESHADPCQDK) are disordered. Residue Cys-96 coordinates substrate. Positions 114 and 116 each coordinate Zn(2+). The active-site Proton donor/acceptor is Glu-138. His-194 is a binding site for Zn(2+).

This sequence belongs to the aldolase class II family. MtnB subfamily. Requires Zn(2+) as cofactor.

It localises to the cytoplasm. It catalyses the reaction 5-(methylsulfanyl)-D-ribulose 1-phosphate = 5-methylsulfanyl-2,3-dioxopentyl phosphate + H2O. It functions in the pathway amino-acid biosynthesis; L-methionine biosynthesis via salvage pathway; L-methionine from S-methyl-5-thio-alpha-D-ribose 1-phosphate: step 2/6. Its function is as follows. Catalyzes the dehydration of methylthioribulose-1-phosphate (MTRu-1-P) into 2,3-diketo-5-methylthiopentyl-1-phosphate (DK-MTP-1-P). Functions in the methionine salvage pathway. May play a role in apoptosis. The polypeptide is Methylthioribulose-1-phosphate dehydratase (Osmerus mordax (Rainbow smelt)).